Consider the following 410-residue polypeptide: LL-diaminopimelate aminotransferase (410 aa).

Residues Tyr-15 and Gly-42 each contribute to the substrate site. Pyridoxal 5'-phosphate is bound by residues Tyr-72, 108–109, Tyr-132, Asn-187, Tyr-218, and 246–248; these read SK and SFS. Substrate contacts are provided by Lys-109, Tyr-132, and Asn-187. The residue at position 249 (Lys-249) is an N6-(pyridoxal phosphate)lysine. Pyridoxal 5'-phosphate-binding residues include Arg-257 and Asn-292. Substrate-binding residues include Asn-292 and Arg-388.

This sequence belongs to the class-I pyridoxal-phosphate-dependent aminotransferase family. LL-diaminopimelate aminotransferase subfamily. Homodimer. Pyridoxal 5'-phosphate is required as a cofactor.

It carries out the reaction (2S,6S)-2,6-diaminopimelate + 2-oxoglutarate = (S)-2,3,4,5-tetrahydrodipicolinate + L-glutamate + H2O + H(+). Its pathway is amino-acid biosynthesis; L-lysine biosynthesis via DAP pathway; LL-2,6-diaminopimelate from (S)-tetrahydrodipicolinate (aminotransferase route): step 1/1. Its function is as follows. Involved in the synthesis of meso-diaminopimelate (m-DAP or DL-DAP), required for both lysine and peptidoglycan biosynthesis. Catalyzes the direct conversion of tetrahydrodipicolinate to LL-diaminopimelate. This chain is LL-diaminopimelate aminotransferase, found in Thermosynechococcus vestitus (strain NIES-2133 / IAM M-273 / BP-1).